Reading from the N-terminus, the 204-residue chain is Proteasome subunit beta type-3-B (204 aa).

Belongs to the peptidase T1B family. As to quaternary structure, component of the 20S core complex of the 26S proteasome. The 26S proteasome is composed of a core protease (CP), known as the 20S proteasome, capped at one or both ends by the 19S regulatory particle (RP/PA700). The 20S proteasome core is composed of 28 subunits that are arranged in four stacked rings, resulting in a barrel-shaped structure. The two end rings are each formed by seven alpha subunits, and the two central rings are each formed by seven beta subunits. The catalytic chamber with the active sites is on the inside of the barrel.

It localises to the cytoplasm. The protein localises to the nucleus. Non-catalytic component of the proteasome, a multicatalytic proteinase complex which is characterized by its ability to cleave peptides with Arg, Phe, Tyr, Leu, and Glu adjacent to the leaving group at neutral or slightly basic pH. The proteasome has an ATP-dependent proteolytic activity. The protein is Proteasome subunit beta type-3-B (PBC2) of Arabidopsis thaliana (Mouse-ear cress).